We begin with the raw amino-acid sequence, 712 residues long: Lactoperoxidase (712 aa).

The N-terminal stretch at M1–A26 is a signal peptide. Residues Q27 to R80 constitute a propeptide that is removed on maturation. N106 is a glycosylation site (N-linked (GlcNAc...) asparagine). The cysteines at positions 132 and 145 are disulfide-linked. An N-linked (GlcNAc...) asparagine glycan is attached at N212. Residue D225 participates in heme b binding. H226 functions as the Proton acceptor in the catalytic mechanism. A Ca(2+)-binding site is contributed by D227. 2 disulfides stabilise this stretch: C246/C256 and C250/C274. The Ca(2+) site is built by T301, F303, D305, and S307. A Phosphoserine modification is found at S315. N322 and N358 each carry an N-linked (GlcNAc...) asparagine glycan. C354 and C365 are disulfide-bonded. Positions 375 and 468 each coordinate heme b. 3'-nitrotyrosine is present on Y482. Intrachain disulfides connect C573/C630 and C671/C696.

Belongs to the peroxidase family. XPO subfamily. It depends on Ca(2+) as a cofactor. Heme b serves as cofactor. Mammary gland, milk and salivary gland. Found in bronchial submucosal glands.

Its subcellular location is the secreted. The protein resides in the cytoplasm. It carries out the reaction 2 a phenolic donor + H2O2 = 2 a phenolic radical donor + 2 H2O. The catalysed reaction is thiocyanate + H2O2 + H(+) = hypothiocyanous acid + H2O. The enzyme catalyses iodide + H2O2 = hypoiodite + H2O. Heme-containing oxidoreductase which catalyzes the conversion of thiocyanate (SCN(-)) into antimicrobial agent hypothiocyanous acid (OSCN(-)) in the presence of hydrogen peroxide (H2O2). Also involved in the conversion of iodide (I(-)) into hypoiodite (IO(-)) in the presence of H2O2. Responsible for the inactivation of a wide range of micro-organisms and hence, important component of defense mechanism. Shows antibacterial properties against Pseudomonas aeruginosa. The lactoperoxidase-SCN(-)-H2O2 system shows antibacterial properties against Burkholderia cepacia and Haemophilus influenzae in vitro. Present in mammary and salivary gland secretions and may contribute to airway host defense against infection. May contribute to maintaining an appropriate H2O2 cellular level, therefore protecting cells from H2O2-caused injuries and inflammation. The protein is Lactoperoxidase of Homo sapiens (Human).